A 159-amino-acid polypeptide reads, in one-letter code: Endoribonuclease YbeY (159 aa).

Zn(2+) contacts are provided by histidine 125, histidine 129, and histidine 135.

The protein belongs to the endoribonuclease YbeY family. Zn(2+) is required as a cofactor.

The protein localises to the cytoplasm. Its function is as follows. Single strand-specific metallo-endoribonuclease involved in late-stage 70S ribosome quality control and in maturation of the 3' terminus of the 16S rRNA. This chain is Endoribonuclease YbeY, found in Ligilactobacillus salivarius (strain UCC118) (Lactobacillus salivarius).